Here is a 592-residue protein sequence, read N- to C-terminus: Aspartate--tRNA(Asp/Asn) ligase (592 aa).

E173 is a binding site for L-aspartate. The tract at residues 197-200 (QLFK) is aspartate. R219 contributes to the L-aspartate binding site. Residues 219-221 (RDE) and Q228 contribute to the ATP site. An L-aspartate-binding site is contributed by H448. E481 serves as a coordination point for ATP. An L-aspartate-binding site is contributed by R488. Position 533–536 (533–536 (GLDR)) interacts with ATP.

Belongs to the class-II aminoacyl-tRNA synthetase family. Type 1 subfamily. Homodimer.

It localises to the cytoplasm. It catalyses the reaction tRNA(Asx) + L-aspartate + ATP = L-aspartyl-tRNA(Asx) + AMP + diphosphate. Aspartyl-tRNA synthetase with relaxed tRNA specificity since it is able to aspartylate not only its cognate tRNA(Asp) but also tRNA(Asn). Reaction proceeds in two steps: L-aspartate is first activated by ATP to form Asp-AMP and then transferred to the acceptor end of tRNA(Asp/Asn). The chain is Aspartate--tRNA(Asp/Asn) ligase from Chromohalobacter salexigens (strain ATCC BAA-138 / DSM 3043 / CIP 106854 / NCIMB 13768 / 1H11).